Here is a 152-residue protein sequence, read N- to C-terminus: Transcriptional regulator MraZ (152 aa).

2 consecutive SpoVT-AbrB domains span residues 5-52 (ATMV…PLPE) and 81-124 (ASEC…DEQT).

The protein belongs to the MraZ family. Forms oligomers.

The protein resides in the cytoplasm. The protein localises to the nucleoid. Its function is as follows. Negatively regulates its own expression and that of the subsequent genes in the proximal part of the division and cell wall (dcw) gene cluster. Acts by binding directly to DNA. May also regulate the expression of genes outside the dcw cluster. This Yersinia pseudotuberculosis serotype O:1b (strain IP 31758) protein is Transcriptional regulator MraZ.